A 724-amino-acid polypeptide reads, in one-letter code: Catalase-peroxidase (724 aa).

The tryptophyl-tyrosyl-methioninium (Trp-Tyr) (with M-252) cross-link spans 98 to 226 (WHSAGTYRIA…LAAVMMGLIY (129 aa)). Histidine 99 functions as the Proton acceptor in the catalytic mechanism. A cross-link (tryptophyl-tyrosyl-methioninium (Tyr-Met) (with W-98)) is located at residues 226–252 (YVNPEGVDGNPDPLKTAQDMRVTFARM). Histidine 267 contributes to the heme b binding site.

It belongs to the peroxidase family. Peroxidase/catalase subfamily. As to quaternary structure, homodimer or homotetramer. Requires heme b as cofactor. Formation of the three residue Trp-Tyr-Met cross-link is important for the catalase, but not the peroxidase activity of the enzyme.

The catalysed reaction is H2O2 + AH2 = A + 2 H2O. It carries out the reaction 2 H2O2 = O2 + 2 H2O. Bifunctional enzyme with both catalase and broad-spectrum peroxidase activity. This Vibrio cholerae serotype O1 (strain ATCC 39315 / El Tor Inaba N16961) protein is Catalase-peroxidase.